Consider the following 263-residue polypeptide: MIDPSAKIHPSAIIHPNAVIGANVEIGAFTCVEDEVEIGEGTWVGSHVLIKGPTKIGRNNKIFQFSSIGEDCQDKKYAGERTFLEIGDANVIREHCTFHRGTVQDQSLTKVGSRNLFMVNVHVAHDCMIGDDCIFANNATLAGHVHIGDWVIFGGLAAIHQFGRVGSHAFIAGMAALNKDVPPYVMAAGHYATPFGINSEGLRRRGFSAEAISAVKRAYKELYRSGKTIDEVMPVLETMAQDEPAVALFVEFLKKNERGIIRP.

Belongs to the transferase hexapeptide repeat family. LpxA subfamily. In terms of assembly, homotrimer.

The protein localises to the cytoplasm. The catalysed reaction is a (3R)-hydroxyacyl-[ACP] + UDP-N-acetyl-alpha-D-glucosamine = a UDP-3-O-[(3R)-3-hydroxyacyl]-N-acetyl-alpha-D-glucosamine + holo-[ACP]. The protein operates within glycolipid biosynthesis; lipid IV(A) biosynthesis; lipid IV(A) from (3R)-3-hydroxytetradecanoyl-[acyl-carrier-protein] and UDP-N-acetyl-alpha-D-glucosamine: step 1/6. Its function is as follows. Involved in the biosynthesis of lipid A, a phosphorylated glycolipid that anchors the lipopolysaccharide to the outer membrane of the cell. The protein is Acyl-[acyl-carrier-protein]--UDP-N-acetylglucosamine O-acyltransferase of Tolumonas auensis (strain DSM 9187 / NBRC 110442 / TA 4).